The sequence spans 714 residues: DNA ligase (714 aa).

NAD(+)-binding positions include 47 to 51 (DAEYD), 96 to 97 (SL), and Glu128. Lys130 serves as the catalytic N6-AMP-lysine intermediate. Residues Arg151, Glu188, Lys306, and Lys330 each contribute to the NAD(+) site. Residues Cys435, Cys438, Cys453, and Cys459 each coordinate Zn(2+). Positions 637-714 (RRDTAVAGKT…TEDEWLALIS (78 aa)) constitute a BRCT domain.

The protein belongs to the NAD-dependent DNA ligase family. LigA subfamily. It depends on Mg(2+) as a cofactor. Requires Mn(2+) as cofactor.

The enzyme catalyses NAD(+) + (deoxyribonucleotide)n-3'-hydroxyl + 5'-phospho-(deoxyribonucleotide)m = (deoxyribonucleotide)n+m + AMP + beta-nicotinamide D-nucleotide.. DNA ligase that catalyzes the formation of phosphodiester linkages between 5'-phosphoryl and 3'-hydroxyl groups in double-stranded DNA using NAD as a coenzyme and as the energy source for the reaction. It is essential for DNA replication and repair of damaged DNA. The sequence is that of DNA ligase from Rhodopseudomonas palustris (strain HaA2).